The primary structure comprises 166 residues: Putative signal peptidase complex catalytic subunit SEC11B (166 aa).

Residues 1-6 (MNKWRL) are Cytoplasmic-facing. Residues 7–24 (YYQVLNFGMIVSSALMIW) traverse the membrane as a helical; Signal-anchor for type II membrane protein segment. Over 25 to 166 (KGLMVITGSE…LGLFVLVHRE (142 aa)) the chain is Extracellular. Residue Ser-43 is part of the active site.

This sequence belongs to the peptidase S26B family.

Its subcellular location is the membrane. The enzyme catalyses Cleavage of hydrophobic, N-terminal signal or leader sequences from secreted and periplasmic proteins.. Putative component of some signal peptidase complex which removes signal peptides from nascent proteins as they are translocated into the lumen of the endoplasmic reticulum. The sequence is that of Putative signal peptidase complex catalytic subunit SEC11B (SEC11B) from Homo sapiens (Human).